A 172-amino-acid polypeptide reads, in one-letter code: C-phycocyanin-2 beta subunit (172 aa).

N4-methylasparagine is present on Asn72. Residues Cys82 and Cys153 each contribute to the (2R,3E)-phycocyanobilin site.

It belongs to the phycobiliprotein family. As to quaternary structure, heterodimer of an alpha and a beta subunit, which further assembles into trimers and the trimers into hexamers. In terms of processing, contains two covalently linked bilin chromophores.

Its subcellular location is the cellular thylakoid membrane. Functionally, light-harvesting photosynthetic bile pigment-protein from the phycobiliprotein complex (phycobilisome, PBS). Phycocyanin is the major phycobiliprotein in the PBS rod. The polypeptide is C-phycocyanin-2 beta subunit (cpcB2) (Microchaete diplosiphon (Fremyella diplosiphon)).